The following is a 152-amino-acid chain: 3-hydroxyacyl-[acyl-carrier-protein] dehydratase FabZ (152 aa).

The active site involves histidine 58.

This sequence belongs to the thioester dehydratase family. FabZ subfamily.

The protein resides in the cytoplasm. It carries out the reaction a (3R)-hydroxyacyl-[ACP] = a (2E)-enoyl-[ACP] + H2O. Its function is as follows. Involved in unsaturated fatty acids biosynthesis. Catalyzes the dehydration of short chain beta-hydroxyacyl-ACPs and long chain saturated and unsaturated beta-hydroxyacyl-ACPs. The polypeptide is 3-hydroxyacyl-[acyl-carrier-protein] dehydratase FabZ (Synechococcus sp. (strain RCC307)).